The chain runs to 411 residues: Citrate synthase (411 aa).

Catalysis depends on residues His304 and Asp363.

This sequence belongs to the citrate synthase family.

The catalysed reaction is oxaloacetate + acetyl-CoA + H2O = citrate + CoA + H(+). It functions in the pathway carbohydrate metabolism; tricarboxylic acid cycle; isocitrate from oxaloacetate: step 1/2. The protein is Citrate synthase (gltA) of Rickettsia parkeri.